A 2789-amino-acid polypeptide reads, in one-letter code: Multiple epidermal growth factor-like domains protein 8 (2789 aa).

An N-terminal signal peptide occupies residues 1-27; it reads MALGGALALALALALAVLGPLSLRVLA. Topologically, residues 28–2591 are extracellular; the sequence is GDCKGQRQVL…FFRQDQAHID (2564 aa). 6 disulfides stabilise this stretch: cysteine 30–cysteine 57, cysteine 142–cysteine 152, cysteine 146–cysteine 158, cysteine 174–cysteine 184, cysteine 178–cysteine 191, and cysteine 193–cysteine 202. In terms of domain architecture, CUB 1 spans 30 to 140; that stretch reads CKGQRQVLRE…LGFNASFRFS (111 aa). N-linked (GlcNAc...) asparagine glycosylation occurs at asparagine 50. EGF-like domains follow at residues 138-168 and 170-203; these read RFSL…GGPD and GLQE…RACD. Kelch repeat units lie at residues 241 to 287, 290 to 338, 346 to 399, 402 to 453, 459 to 511, and 525 to 575; these read LLAV…AVAW, LLVL…AGHA, WLYV…FHAP, TLLV…FHTA, YMVV…APPS, and VLLV…SRDP. 3 PSI domains span residues 561-613, 847-899, and 900-947; these read YCSM…SDCQ, ACTS…ALCP, and LCEE…EECP. Residue asparagine 1048 is glycosylated (N-linked (GlcNAc...) asparagine). Residues 1074 to 1115 form the EGF-like 3; calcium-binding domain; the sequence is DVDECRLGLARCHPRATCLNTPLSYECHCQRGYQGDGITHCN. 16 cysteine pairs are disulfide-bonded: cysteine 1078–cysteine 1091, cysteine 1085–cysteine 1100, cysteine 1102–cysteine 1114, cysteine 1163–cysteine 1171, cysteine 1165–cysteine 1179, cysteine 1182–cysteine 1191, cysteine 1194–cysteine 1208, cysteine 1211–cysteine 1224, cysteine 1213–cysteine 1231, cysteine 1233–cysteine 1242, cysteine 1245–cysteine 1259, cysteine 1263–cysteine 1302, cysteine 1336–cysteine 1367, cysteine 1407–cysteine 1421, cysteine 1415–cysteine 1433, and cysteine 1435–cysteine 1444. Laminin EGF-like domains are found at residues 1163 to 1210 and 1211 to 1261; these read CGCS…GCRP and CQCN…SCFR. An N-linked (GlcNAc...) asparagine glycan is attached at asparagine 1226. The 143-residue stretch at 1263 to 1405 folds into the CUB 2 domain; the sequence is CGGRALLTNV…WGFNASVGSA (143 aa). Asparagine 1271 carries an N-linked (GlcNAc...) asparagine glycan. Threonine 1353 bears the Phosphothreonine mark. Residues 1403 to 1445 form the EGF-like 4 domain; it reads GSARCGSGGPGSCPVPQECVPQDGAAGAGLCRCPQGWAGPHCR. Kelch repeat units follow at residues 1522 to 1570, 1580 to 1629, 1632 to 1679, 1685 to 1735, 1740 to 1787, and 1796 to 1841; these read TLWM…SFHA, AMYL…TARR, SLLL…SAVY, SLYV…HASA, TMVV…ESVA, and RLYI…WCHG. 4 consecutive PSI domains span residues 1820–1860, 1868–1923, 2004–2062, and 2064–2121; these read PCRL…PPCS, ECRR…NDCR, PCHL…ESCS, and GCAQ…LSCP. N-linked (GlcNAc...) asparagine glycosylation is present at asparagine 2010. An EGF-like 5 domain is found at 2122–2160; sequence PEDECANGHHDCNETQNCHDQPHGYECSCKTGYTMDNVT. Cystine bridges form between cysteine 2126–cysteine 2139 and cysteine 2133–cysteine 2148. N-linked (GlcNAc...) asparagine glycosylation is found at asparagine 2158 and asparagine 2173. Intrachain disulfides connect cysteine 2197/cysteine 2205, cysteine 2199/cysteine 2214, cysteine 2217/cysteine 2226, cysteine 2229/cysteine 2243, cysteine 2324/cysteine 2333, cysteine 2326/cysteine 2341, cysteine 2343/cysteine 2368, and cysteine 2371/cysteine 2385. Laminin EGF-like domains are found at residues 2197-2245 and 2324-2387; these read CRCN…TCRP and CQCN…QCYR. The disordered stretch occupies residues 2468-2508; the sequence is VHIQPPPPPPPPPPPADGVPRVAADLGGLGTGSGSGSPVEP. Positions 2471 to 2484 are enriched in pro residues; the sequence is QPPPPPPPPPPPAD. A helical transmembrane segment spans residues 2592 to 2612; sequence LFVFFSVFFSCFFLFLSLCVL. The Cytoplasmic portion of the chain corresponds to 2613–2789; it reads LWKAKQALDQ…SQDNLTSMSL (177 aa). The span at 2762-2776 shows a compositional bias: gly residues; it reads GGAGGSGHGGGGGRK. Residues 2762-2789 are disordered; it reads GGAGGSGHGGGGGRKGLLSQDNLTSMSL. The span at 2780–2789 shows a compositional bias: polar residues; the sequence is SQDNLTSMSL.

As to expression, highest expression in brain, testis and kidney.

It localises to the membrane. In terms of biological role, acts as a negative regulator of hedgehog signaling. The chain is Multiple epidermal growth factor-like domains protein 8 (Megf8) from Mus musculus (Mouse).